The chain runs to 134 residues: Interleukin-4 (134 aa).

The first 23 residues, 1 to 23 (MGLTYQLLPALVCLLACTSFIQG), serve as a signal peptide directing secretion. Intrachain disulfides connect Cys-24–Cys-133 and Cys-48–Cys-88. N-linked (GlcNAc...) asparagine glycosylation is present at Asn-38. Residue Asn-101 is glycosylated (N-linked (GlcNAc...) asparagine).

This sequence belongs to the IL-4/IL-13 family.

The protein localises to the secreted. In terms of biological role, participates in at least several B-cell activation processes as well as of other cell types. It is a costimulator of DNA-synthesis. It induces the expression of class II MHC molecules on resting B-cells. It enhances both secretion and cell surface expression of IgE and IgG1. It also regulates the expression of the low affinity Fc receptor for IgE (CD23) on both lymphocytes and monocytes. Positively regulates IL31RA expression in macrophages. Stimulates autophagy in dendritic cells by interfering with mTORC1 signaling and through the induction of RUFY4. This chain is Interleukin-4 (IL4), found in Equus caballus (Horse).